The following is a 215-amino-acid chain: MAEDTETRPASAGAEEREEGEIADDGDGSAAAAAGRVSAHPLENAWTFWFDNPQGKSRAVAWGSTIHPIHTFSTVEDFWSLYNNIHHPSKLNVGADFHCFKDKIEPKWEDPICANGGKWTISCGKGKSDTFWLHTLLALIGEQFDFGDEICGAVVSVRKNQERVAIWTKNAANETAQISIGKQWKEFLDYKDSIGFVVHEDAKRSDKGAKNRYTV.

The tract at residues 1–35 is disordered; sequence MAEDTETRPASAGAEEREEGEIADDGDGSAAAAAG. Residues 16 to 27 are compositionally biased toward acidic residues; that stretch reads EREEGEIADDGD. 2 EIF4G-binding regions span residues 40-43 and 50-86; these read HPLE and FDNPQGKSRAVAWGSTIHPIHTFSTVEDFWSLYNNIH. Residues 58–63, K90, and 108–109 contribute to the mRNA site; these read RAVAWG and WE. A disulfide bridge links C113 with C151. Residues 134–143 form an EIF4G-binding region; that stretch reads HTLLALIGEQ. MRNA-binding positions include 158–163 and 203–207; these read RKNQER and KRSDK.

It belongs to the eukaryotic initiation factor 4E family. As to quaternary structure, EIF4F is a multi-subunit complex, the composition of which varies with external and internal environmental conditions. It is composed of at least EIF4A, EIF4E and EIF4G. EIF4E is also known to interact with other partners. In higher plants two isoforms of EIF4F have been identified, named isoform EIF4F and isoform EIF(iso)4F. Isoform EIF4F has subunits p220 and p26, whereas isoform EIF(iso)4F has subunits p82 and p28. (Microbial infection) Interacts with potyvirus viral genome-linked protein (VPg); this interaction is possible in susceptible hosts but impaired in resistant plants. According to the redox status, the Cys-113-Cys-151 disulfide bridge may have a role in regulating protein function by affecting its ability to bind capped mRNA.

The protein resides in the nucleus. It localises to the cytoplasm. Its function is as follows. Component of the protein complex eIF4F, which is involved in the recognition of the mRNA cap, ATP-dependent unwinding of 5'-terminal secondary structure and recruitment of mRNA to the ribosome. Recognizes and binds the 7-methylguanosine-containing mRNA cap during an early step in the initiation of protein synthesis and facilitates ribosome binding by inducing the unwinding of the mRNAs secondary structures. Key component of recessive resistance to potyviruses and bymoviruses, including barley yellow mosaic virus and barley mild mosaic virus. Functionally, (Microbial infection) Susceptibility host factor required for viral infection by recruiting viral RNAs to the host ribosomal complex via an interaction with viral genome-linked protein (VPg). In Hordeum vulgare subsp. vulgare (Domesticated barley), this protein is Eukaryotic translation initiation factor 4E-1.